Here is a 268-residue protein sequence, read N- to C-terminus: MLFDIFRAVILGVVEGVTEFLPVSSTGHLLLVGRFFNLGEDSFWKSFAVLIQLGAILAILSIYFAKLWRIALGMFSDPAARRFVIGVLVAFLPAAMIGAVAGSYIKLYLFNPWVVCFSLIVGGAILLWVDQLDLNPQQHDATAFPLPMYFYIGCAQCLAMIPGVSRSGASIVAAMLFGADKRSAAEFSFFLAIPTMVGAFVYDFYKNRGEMTTDHLTIVAIGFVVSFITAVIVVKTFLGYVTRHGFELFAWWRVIVGTLGLIALAMGR.

Helical transmembrane passes span 47–67 (FAVLIQLGAILAILSIYFAKL), 83–103 (FVIGVLVAFLPAAMIGAVAGS), 109–129 (LFNPWVVCFSLIVGGAILLWV), 144–164 (FPLPMYFYIGCAQCLAMIPGV), 184–204 (AAEFSFFLAIPTMVGAFVYDF), 218–238 (IVAIGFVVSFITAVIVVKTFL), and 246–266 (FELFAWWRVIVGTLGLIALAM).

This sequence belongs to the UppP family.

It is found in the cell inner membrane. The enzyme catalyses di-trans,octa-cis-undecaprenyl diphosphate + H2O = di-trans,octa-cis-undecaprenyl phosphate + phosphate + H(+). In terms of biological role, catalyzes the dephosphorylation of undecaprenyl diphosphate (UPP). Confers resistance to bacitracin. In Rhodopseudomonas palustris (strain BisB5), this protein is Undecaprenyl-diphosphatase.